The chain runs to 155 residues: Transcriptional repressor NrdR (155 aa).

A zinc finger lies at 3 to 34; sequence CPFCAANDTKVIDSRLVAEGDQVRRRRECVAC. The ATP-cone domain occupies 49-139; it reads PRLIKQDGSR…VYRRFQDLNE (91 aa).

Belongs to the NrdR family. Zn(2+) serves as cofactor.

Functionally, negatively regulates transcription of bacterial ribonucleotide reductase nrd genes and operons by binding to NrdR-boxes. The chain is Transcriptional repressor NrdR from Ectopseudomonas mendocina (strain ymp) (Pseudomonas mendocina).